The primary structure comprises 395 residues: Tubulin-like protein CetZ1 (395 aa).

GTP-binding positions include 10 to 14, 110 to 112, Glu142, Asn169, and Asn187; these read QAGGK and GTG.

This sequence belongs to the CetZ family.

It is found in the cytoplasm. In terms of biological role, involved in cell shape control. Essential for the development of a rod-shaped cell type required for efficient swimming. The chain is Tubulin-like protein CetZ1 from Haloferax volcanii (strain ATCC 29605 / DSM 3757 / JCM 8879 / NBRC 14742 / NCIMB 2012 / VKM B-1768 / DS2) (Halobacterium volcanii).